The chain runs to 225 residues: Germin-like protein 3-8 (225 aa).

The first 25 residues, 1–25 (MSRTSSAPLLVLSAALAVLASTCIA), serve as a signal peptide directing secretion. C34 and C57 form a disulfide bridge. The region spanning 71-219 (AGLAVASDTD…SFQVDAKIIK (149 aa)) is the Cupin type-1 domain. N86 is a glycosylation site (N-linked (GlcNAc...) asparagine). 4 residues coordinate Mn(2+): H119, H121, E126, and H165.

This sequence belongs to the germin family. In terms of assembly, oligomer (believed to be a pentamer but probably hexamer).

The protein localises to the secreted. The protein resides in the extracellular space. It localises to the apoplast. Functionally, may play a role in plant defense. Probably has no oxalate oxidase activity even if the active site is conserved. The chain is Germin-like protein 3-8 from Oryza sativa subsp. japonica (Rice).